Reading from the N-terminus, the 370-residue chain is Peptide chain release factor 1 (370 aa).

At Gln237 the chain carries N5-methylglutamine. Positions 286 to 296 are enriched in basic and acidic residues; the sequence is ERQRSARDATR. The disordered stretch occupies residues 286 to 310; the sequence is ERQRSARDATRKSQVGTGDRSEKIR.

This sequence belongs to the prokaryotic/mitochondrial release factor family. Post-translationally, methylated by PrmC. Methylation increases the termination efficiency of RF1.

It localises to the cytoplasm. Peptide chain release factor 1 directs the termination of translation in response to the peptide chain termination codons UAG and UAA. This is Peptide chain release factor 1 from Anaeromyxobacter dehalogenans (strain 2CP-C).